A 341-amino-acid polypeptide reads, in one-letter code: Methionine import ATP-binding protein MetN 1 (341 aa).

In terms of domain architecture, ABC transporter spans 2–241; the sequence is IEFRQVSKSF…PKTTIAQNFV (240 aa). Residue 38–45 coordinates ATP; that stretch reads GYSGAGKS.

It belongs to the ABC transporter superfamily. Methionine importer (TC 3.A.1.24) family. In terms of assembly, the complex is composed of two ATP-binding proteins (MetN), two transmembrane proteins (MetI) and a solute-binding protein (MetQ).

The protein localises to the cell membrane. It carries out the reaction L-methionine(out) + ATP + H2O = L-methionine(in) + ADP + phosphate + H(+). The enzyme catalyses D-methionine(out) + ATP + H2O = D-methionine(in) + ADP + phosphate + H(+). In terms of biological role, part of the ABC transporter complex MetNIQ involved in methionine import. Responsible for energy coupling to the transport system. The chain is Methionine import ATP-binding protein MetN 1 from Staphylococcus aureus (strain bovine RF122 / ET3-1).